The following is a 204-amino-acid chain: Probable GTP-binding protein EngB (204 aa).

Positions 1–21 (MKVSSAEFVTSGTRPAHYPPP) are disordered. The EngB-type G domain occupies 22 to 194 (ELPEVAFAGR…WARIEVMLAA (173 aa)). Residues 30-37 (GRSNVGKS), 57-61 (GRTQL), 75-78 (DLPG), 142-145 (TKCD), and 173-175 (FSA) each bind GTP. S37 and T59 together coordinate Mg(2+).

This sequence belongs to the TRAFAC class TrmE-Era-EngA-EngB-Septin-like GTPase superfamily. EngB GTPase family. Requires Mg(2+) as cofactor.

Functionally, necessary for normal cell division and for the maintenance of normal septation. The protein is Probable GTP-binding protein EngB of Geobacter metallireducens (strain ATCC 53774 / DSM 7210 / GS-15).